The chain runs to 657 residues: Probable potassium transport system protein Kup (657 aa).

Helical transmembrane passes span 14 to 34 (IGGL…SPLY), 47 to 67 (ADIV…QTTI), 96 to 116 (IQWL…DGII), 140 to 160 (TIVY…QFGT), 166 to 186 (FFAP…FIQI), 201 to 221 (AYHL…VFLC), 242 to 262 (ISWI…AAYL), 283 to 303 (LIMP…AAVI), 340 to 360 (LYIP…VLHF), 371 to 391 (GLAI…YLIM), 396 to 416 (LYFM…FLIA), and 425 to 445 (GYVT…WYLA).

Belongs to the HAK/KUP transporter (TC 2.A.72) family.

The protein resides in the cell inner membrane. The enzyme catalyses K(+)(in) + H(+)(in) = K(+)(out) + H(+)(out). Transport of potassium into the cell. Likely operates as a K(+):H(+) symporter. The polypeptide is Probable potassium transport system protein Kup (Flavobacterium johnsoniae (strain ATCC 17061 / DSM 2064 / JCM 8514 / BCRC 14874 / CCUG 350202 / NBRC 14942 / NCIMB 11054 / UW101) (Cytophaga johnsonae)).